Reading from the N-terminus, the 699-residue chain is Polyribonucleotide nucleotidyltransferase (699 aa).

Mg(2+)-binding residues include aspartate 484 and aspartate 490. One can recognise a KH domain in the interval 551–610 (PRITTIQVKPDQVRTVIGPGGKNVRGIIEATGCAIDIEDDGRINIASADGDACKAAIKMI). An S1 motif domain is found at 620–688 (GKLYMATVKK…RQGKIKLSRK (69 aa)).

This sequence belongs to the polyribonucleotide nucleotidyltransferase family. It depends on Mg(2+) as a cofactor.

It localises to the cytoplasm. The enzyme catalyses RNA(n+1) + phosphate = RNA(n) + a ribonucleoside 5'-diphosphate. Its function is as follows. Involved in mRNA degradation. Catalyzes the phosphorolysis of single-stranded polyribonucleotides processively in the 3'- to 5'-direction. This Syntrophotalea carbinolica (strain DSM 2380 / NBRC 103641 / GraBd1) (Pelobacter carbinolicus) protein is Polyribonucleotide nucleotidyltransferase.